The following is a 332-amino-acid chain: MSVKELLIQNVHKEEHSHAHNKITVVGVGAVGMACAISILMKDLADELALVDVIEDKLRGEMLDLQHGSLFLRTPKIVSGKDYSVTAHSKLVIITAGARQQEGESRLNLVQRNVNIFKFIIPNVVKYSPDCMLLVVSNPVDILTYVAWKISGFPKHRVIGSGCNLDSARFRYLMGEKLGIHSLSCHGWIIGEHGDSSVPVWSGVNVAGVSLKALYPDLGTDADKEHWKEVHKQVVDSAYEVIKLKGYTSWAIGLSVADLAETVMKNLRRVHPISTMVKGMYGVSSDVFLSVPCVLGYAGITDVVKMTLKSEEEEKLRKSADTLWGIQKELQF.

NAD(+)-binding positions include 29 to 57 and R99; that span reads GAVGMACAISILMKDLADELALVDVIEDK. R106, N138, and R169 together coordinate substrate. N138 serves as a coordination point for NAD(+). The active-site Proton acceptor is the H193. T248 contacts substrate.

This sequence belongs to the LDH/MDH superfamily. LDH family. As to quaternary structure, homotetramer.

It localises to the cytoplasm. The catalysed reaction is (S)-lactate + NAD(+) = pyruvate + NADH + H(+). Its pathway is fermentation; pyruvate fermentation to lactate; (S)-lactate from pyruvate: step 1/1. In terms of biological role, interconverts simultaneously and stereospecifically pyruvate and lactate with concomitant interconversion of NADH and NAD(+). This is L-lactate dehydrogenase A chain (LDHA) from Pelodiscus sinensis japonicus (Chinese soft-shelled turtle).